The following is a 70-amino-acid chain: Mu-conotoxin-like Am3.4 (70 aa).

An N-terminal signal peptide occupies residues 1–20; sequence MMYKLGVLLIICLLLFPLTA. Positions 21–53 are excised as a propeptide; sequence VPQDGDQPADRPAERMQDDISFEHDRFFDPVKR. Disulfide bonds link Cys54–Cys69, Cys55–Cys65, and Cys61–Cys68. Pro67 is modified (4-hydroxyproline; partial; in major form). Cys69 is subject to Cysteine amide.

Belongs to the conotoxin M superfamily. Contains 3 disulfide bonds. Expressed by the venom duct.

The protein localises to the secreted. In terms of biological role, mu-conotoxins block voltage-gated sodium channels (Nav). The sequence is that of Mu-conotoxin-like Am3.4 from Conus amadis (Amadis cone).